The chain runs to 98 residues: mRNA interferase toxin MqsR (98 aa).

In terms of assembly, might be a dimer. Also reported to be a monomer. Crystallizes as a heterotetramer with MqsA, MqsR-MqsA(2)-MqsR. Purifies as a possible heterohexamer of 2 MqsR dimers and 1 MqsA dimer. When the 2 dissociate the MsqR mRNA interferase becomes active.

Functionally, toxic component of a type II toxin-antitoxin (TA) system. Plays a significant role in the control of biofilm formation and induction of persister cells in the presence of antibiotics. An mRNA interferase which has been reported to be translation-independent. It has also been reported to be translation-dependent. Cleavage has been reported to occur on either side of G in the sequence GCU. Also reported to cleave after C in GC(A/U) sequences. There are only 14 genes in E.coli W3110 (and probably also MG1655) that do not have a GCU sequence and thus are resistant to the mRNA interferase activity; among these is the gene for toxin GhoT. Overexpression of MqsR causes cessation of cell growth and inhibits cell proliferation via inhibition of translation as well as increasing persister cell formation; these effects are overcome by concomitant or subsequent expression of antitoxin MqsA. Cross-talk can occur between different TA systems. Ectopic expression of this toxin induces transcription of the relBEF TA system operon with specific cleavage of the relBEF mRNA produced. Regulates the expression of GhoT/GhoS, a type V TA system. Persistence depends on toxin GhoT activity, which MqsR controls at the post-transcriptional level by selectively degrading the antitoxin ghoS segment of the ghoST mRNA. Overexpression leads to a dramatic increase in tolerance to the antibiotic ofloxacin. This TA system mediates cell growth during bile acid deoxycholate stress by degrading mRNA for probable deoxycholate-binding protein YgiS; bile acid detergents such as deoxycholate are important for host defense against bacterial growth in the gall bladder and duodenum. Initially reported to act as a cotranscription factor with MqsA. Following further experiments, the MqsR-MqsA complex does not bind DNA and all reported data are actually due to a small fraction of free MqsA alone binding DNA. Addition of MqsR to a preformed MqsA-promoter DNA complex causes dissociation of the MqsA-DNA complex, probably causing derepression of MqsA-repressed transcripts. Does not bind DNA in the presence or absence of MqsA. This Escherichia coli (strain K12) protein is mRNA interferase toxin MqsR.